Reading from the N-terminus, the 754-residue chain is ATP-dependent zinc metalloprotease FtsH (754 aa).

Residues 1–9 (MKQRMKKPS) are Cytoplasmic-facing. The chain crosses the membrane as a helical span at residues 10–30 (LGTFILILILIGILAYVLWQF). Residues 31 to 186 (LSPKLGYKSL…FDRPRGNFLS (156 aa)) are Extracellular-facing. Residues 187–207 (SFIVPYIPFLLISLFGFWLFF) form a helical membrane-spanning segment. Residues 208-754 (RLSQNSQAGG…ESKIDSSKEQ (547 aa)) lie on the Cytoplasmic side of the membrane. 277 to 284 (GPPGTGKT) is a binding site for ATP. A Zn(2+)-binding site is contributed by His499. Residue Glu500 is part of the active site. 2 residues coordinate Zn(2+): His503 and Asp577. A disordered region spans residues 713–754 (QEKSYENEDQNQNSLEAINYNIDDQDDDKNDSESKIDSSKEQ). Residues 743 to 754 (DSESKIDSSKEQ) are compositionally biased toward basic and acidic residues.

In the central section; belongs to the AAA ATPase family. It in the C-terminal section; belongs to the peptidase M41 family. Homohexamer. The cofactor is Zn(2+).

Its subcellular location is the cell membrane. In terms of biological role, acts as a processive, ATP-dependent zinc metallopeptidase for both cytoplasmic and membrane proteins. Plays a role in the quality control of integral membrane proteins. The chain is ATP-dependent zinc metalloprotease FtsH from Mesomycoplasma conjunctivae (strain ATCC 25834 / NCTC 10147 / HRC/581) (Mycoplasma conjunctivae).